A 121-amino-acid chain; its full sequence is Large ribosomal subunit protein uL14 (121 aa).

Belongs to the universal ribosomal protein uL14 family. Part of the 50S ribosomal subunit. Forms a cluster with proteins L3 and L19. In the 70S ribosome, L14 and L19 interact and together make contacts with the 16S rRNA in bridges B5 and B8.

Its function is as follows. Binds to 23S rRNA. Forms part of two intersubunit bridges in the 70S ribosome. The chain is Large ribosomal subunit protein uL14 from Prochlorococcus marinus (strain SARG / CCMP1375 / SS120).